The following is a 156-amino-acid chain: Arginine repressor (156 aa).

This sequence belongs to the ArgR family.

It is found in the cytoplasm. The protein operates within amino-acid biosynthesis; L-arginine biosynthesis [regulation]. Its function is as follows. Regulates arginine biosynthesis genes. In Shewanella sediminis (strain HAW-EB3), this protein is Arginine repressor.